Consider the following 42-residue polypeptide: Photosystem I reaction center subunit IX (42 aa).

The chain crosses the membrane as a helical span at residues 7–27 (YLSVAPVLSTLWFVSLAGLLI).

Belongs to the PsaJ family.

It localises to the plastid. The protein localises to the chloroplast thylakoid membrane. In terms of biological role, may help in the organization of the PsaE and PsaF subunits. The chain is Photosystem I reaction center subunit IX from Capsella bursa-pastoris (Shepherd's purse).